The sequence spans 732 residues: TIR domain-containing adapter molecule 1 (732 aa).

Residues 1–153 (MDNPGPSLRG…CSSDIKGDPS (153 aa)) are TRIF-NTD. The short motif at 84–91 (EGPEEPPD) is the TRAF6-binding element. Residues 144–191 (CSSDIKGDPSGFQPLHSHQGSLQPPSASPAVTRSQPRPIDTPDWSWGH) are disordered. The segment covering 159–178 (HSHQGSLQPPSASPAVTRSQ) has biased composition (polar residues). A pLxIS motif motif is present at residues 206–209 (LEIS). At Ser-209 the chain carries Phosphoserine. A Glycyl lysine isopeptide (Lys-Gly) (interchain with G-Cter in ubiquitin) cross-link involves residue Lys-228. 2 consecutive short sequence motifs (TRAF6-binding) follow at residues 247–254 (QEPEEISW) and 296–306 (HCPIECTELST). Residues 305–331 (STNSRSPLTSTTESVGKQWPITSQRSP) are compositionally biased toward polar residues. The segment at 305 to 389 (STNSRSPLTS…TSTSPVLDHS (85 aa)) is disordered. Residues 345–359 (SSSPPAQPPSLQASP) are compositionally biased toward low complexity. The 140-residue stretch at 395-534 (KFYNFVVIHA…KVANTFKTQK (140 aa)) folds into the TIR domain. Positions 514–713 (WLDEHSPIFA…SSDDKTECSE (200 aa)) are sufficient to induce apoptosis. Disordered stretches follow at residues 603–679 (TPSW…GPQP) and 696–732 (MWGH…ETPE). Composition is skewed to pro residues over residues 604 to 615 (PSWPGCPQPIPS) and 625 to 657 (PYSP…PPVS). Residues 658–671 (SPQSQSFPSASSPA) show a composition bias toward low complexity.

Homodimer. Found in a multi-helicase-TICAM1 complex at least composed of DHX36, DDX1, DDX21 and TICAM1; this complex exists in resting cells with or without poly(I:C) RNA ligand stimulation. Interacts (via TIR domain) with DDX21 (via C-terminus). Interacts (via TIR domain) with DHX36 (via C-terminus). Interacts with AZI2 and IRF7. Interacts (when phosphorylated) with IRF3; following activation and phosphorylation on the pLxIS motif by TBK1, recruits IRF3. Interacts with TICAM2 in TLR4 recruitment. Interaction with PIAS4 inhibits the TICAM1-induced NF-kappa-B, IRF and IFNB1 activation. Interacts with IKBKB and IKBKE. Interaction with SARM1 blocks TICAM1-dependent transcription factor activation. Interacts with TRAF3. Interacts with TRAFD1. Interacts with UBQLN1 (via UBA domain). Interacts with TBK1, TRAF6 and RIPK1 and these interactions are enhanced in the presence of WDFY1. Interacts (via the TIR domain) with TLR3 in response to poly(I:C) and this interaction is enhanced in the presence of WDFY1. Interacts with TLR4 in response to poly(I:C) in a WDFY1-dependent manner. Interacts with WDFY1 in response to poly(I:C). Interacts with TRIM56. Interacts (via the TIR domain) with TLR5. Interacts with TRIM8. Interacts with TAX1BP1 and TRIM32; these interactions target TICAM1 to TAX1BP1-mediated selective autophagic degradation. Interacts with DDX50. In terms of processing, phosphorylated by TBK1. Following activation, phosphorylated by TBK1 at Ser-209 in the pLxIS motif. The phosphorylated pLxIS motif constitutes an IRF3-binding motif, leading to recruitment of the transcription factor IRF3 to induce type-I interferons and other cytokines. Polyubiquitinated at Lys-228 by TRIM38 with 'Lys-48'-linked chains, leading to proteasomal degradation. Polyubiquitinated with 'Lys-6'- and 'Lys-33'-linked chains in a TRIM8-dependent manner; ubiquitination disrupts the interaction with TBK1 and subsequent interferon production.

The protein localises to the cytoplasm. Its subcellular location is the cytosol. It localises to the cytoplasmic vesicle. It is found in the autophagosome. The protein resides in the mitochondrion. Its function is as follows. Involved in innate immunity against invading pathogens. Adapter used by TLR3, TLR4 (through TICAM2) and TLR5 to mediate NF-kappa-B and interferon-regulatory factor (IRF) activation, and to induce apoptosis. Ligand binding to these receptors results in TRIF recruitment through its TIR domain. Distinct protein-interaction motifs allow recruitment of the effector proteins TBK1, TRAF6 and RIPK1, which in turn, lead to the activation of transcription factors IRF3 and IRF7, NF-kappa-B and FADD respectively. Phosphorylation by TBK1 on the pLxIS motif leads to recruitment and subsequent activation of the transcription factor IRF3 to induce expression of type I interferon and exert a potent immunity against invading pathogens. Component of a multi-helicase-TICAM1 complex that acts as a cytoplasmic sensor of viral double-stranded RNA (dsRNA) and plays a role in the activation of a cascade of antiviral responses including the induction of pro-inflammatory cytokines. In Mus musculus (Mouse), this protein is TIR domain-containing adapter molecule 1 (Ticam1).